Consider the following 467-residue polypeptide: L-histidine transporter HutT (467 aa).

The next 13 membrane-spanning stretches (helical) occupy residues 18-38, 39-59, 71-91, 99-119, 125-145, 155-175, 200-220, 245-265, 280-300, 334-354, 358-378, 402-422, and 429-449; these read FMAL…SAIQ, MAGP…FMVM, VAGS…GFIL, MVIV…FWFP, IWVL…VKVF, LKVG…AFGF, VGGL…IEII, ILLF…WPQI, GIGS…ISAI, WMTV…NYLI, VFLL…LMIL, FWPY…GVLG, and AALI…LLWC.

This sequence belongs to the amino acid-polyamine-organocation (APC) superfamily. Amino acid transporter (AAT) (TC 2.A.3.1) family.

Its subcellular location is the cell inner membrane. The enzyme catalyses L-histidine(out) + n H(+)(out) = L-histidine(in) + n H(+)(in). Its activity is regulated as follows. Transport activity is inhibited by the proton ionophores carbonyl cyanide m-chlorophenyl hydrazine (CCCP) and 2,4-dinitrophenol (DNP), but not by valinomycin, nigericin and nonactin. Uptake is reduced in the presence of the sulfhydryl reagent N-ethylmaleimide (NEM). Uptake is not affected by arginine, lysine, proline or compounds structurally related to histidine such as imidazole, 3-amino-1,2,4-triazole and urocanate. Only 1,2,4-triazolyl-3-alanine reduces the rate of L-histidine uptake significantly. Functionally, major high-affinity histidine transporter. Binds and catalyzes the uptake of histidine into the cell. Functions as an histidine:proton symporter with high specificity for histidine. The polypeptide is L-histidine transporter HutT (Pseudomonas putida (strain ATCC 47054 / DSM 6125 / CFBP 8728 / NCIMB 11950 / KT2440)).